Here is a 688-residue protein sequence, read N- to C-terminus: MRAAEERKGVVPAARRRDQFPVGMRVLAVDDDPVCLKVLETLLLRCQYHVTTTNQAAIALKMLRENRDMFDLVISDVHMPDMDGFKLLELVGLEMDLPVIMLSVNGETKTVLKGITHGACDYLLKPVRIEELRNIWQHVIRRKFSTRDRANLDFYEECNKPPNADSDHVHGHVTCGSPDQSGRPSKKRKEYCSEEEDEGEVNTQDIDDPSAPKKPRVVWSVELHRKFVAAVNQLGIDKAVPKRILELMNVEKLTRENVASHLQKYRLYLKRLSAVASQQVSIVAALGGRDPFLHMGGFEGLQGYQAFTSSAALSSFTPHGLLNSPRNNPAALGTQGVPASKSIQTMSGSHTLSHSINDANKYHLSLPGNQKGNLGQGLATSLGQTQMQQKWIHEETDDLSTILSGNGLSNGMSGTLQSVTSSPLLPQELAECTQAKIVSQPSIRTSSVSSEHIEGAVGVSSGLLESRVSQQSTIPLSGFSANGLLIHGSFNNTCANKLGGTSSSCAPARSSNDLMVARDTKGGASSFGGAMLLPPDTEQKYLNFGGGNGLKQKFDDRTADSLFDLKFVWSSVPSSQLASNIGAHHAMSQRWNNSSSNSSNIGARMIGQATSSGSTVIPQMKTDFLVSGDMAMPKNASDLSIPKLQSELSSSSCSFDGLLNSIVKVEKDDVTFSDDLGCGDFYSLGACI.

Residues 25–140 (RVLAVDDDPV…ELRNIWQHVI (116 aa)) form the Response regulatory domain. A 4-aspartylphosphate modification is found at Asp76. A disordered region spans residues 161-212 (PPNADSDHVHGHVTCGSPDQSGRPSKKRKEYCSEEEDEGEVNTQDIDDPSAP). The segment covering 193–208 (SEEEDEGEVNTQDIDD) has biased composition (acidic residues). A DNA-binding region (myb-like GARP) is located at residues 211–270 (APKKPRVVWSVELHRKFVAAVNQLGIDKAVPKRILELMNVEKLTRENVASHLQKYRLYLK).

Belongs to the ARR family. Type-B subfamily. Two-component system major event consists of a His-to-Asp phosphorelay between a sensor histidine kinase (HK) and a response regulator (RR). In plants, the His-to-Asp phosphorelay involves an additional intermediate named Histidine-containing phosphotransfer protein (HPt). This multistep phosphorelay consists of a His-Asp-His-Asp sequential transfer of a phosphate group between first a His and an Asp of the HK protein, followed by the transfer to a conserved His of the HPt protein and finally the transfer to an Asp in the receiver domain of the RR protein.

The protein resides in the nucleus. Its function is as follows. Transcriptional activator that binds specific DNA sequence. Functions as a response regulator involved in His-to-Asp phosphorelay signal transduction system. Phosphorylation of the Asp residue in the receiver domain activates the ability of the protein to promote the transcription of target genes. May directly activate some type-A response regulators in response to cytokinins. The chain is Two-component response regulator ORR23 from Oryza sativa subsp. japonica (Rice).